The primary structure comprises 225 residues: Agamous-like MADS-box protein MADS1 (225 aa).

As to expression, expressed in flowers and seeds.

Its subcellular location is the nucleus. Functionally, probable transcription factor involved in flower development. This chain is Agamous-like MADS-box protein MADS1, found in Vitis vinifera (Grape).